The primary structure comprises 167 residues: Ubiquitin-fold modifier-conjugating enzyme 1 (167 aa).

The Glycyl thioester intermediate role is filled by Cys-116.

The protein belongs to the ubiquitin-conjugating enzyme family. UFC1 subfamily.

In terms of biological role, E2-like enzyme which forms an intermediate with UFM1 via a thioester linkage. The polypeptide is Ubiquitin-fold modifier-conjugating enzyme 1 (Anopheles gambiae (African malaria mosquito)).